A 475-amino-acid chain; its full sequence is Sulfate adenylyltransferase subunit 1 (475 aa).

Positions 25 to 239 (KSLLRFLTCG…EVLETVEIQR (215 aa)) constitute a tr-type G domain. A G1 region spans residues 34 to 41 (GSVDDGKS). 34-41 (GSVDDGKS) contacts GTP. Positions 92-96 (GITID) are G2. The interval 113–116 (DTPG) is G3. GTP-binding positions include 113 to 117 (DTPGH) and 168 to 171 (NKMD). A G4 region spans residues 168-171 (NKMD). The tract at residues 206 to 208 (SAL) is G5.

This sequence belongs to the TRAFAC class translation factor GTPase superfamily. Classic translation factor GTPase family. CysN/NodQ subfamily. In terms of assembly, heterodimer composed of CysD, the smaller subunit, and CysN.

The enzyme catalyses sulfate + ATP + H(+) = adenosine 5'-phosphosulfate + diphosphate. It functions in the pathway sulfur metabolism; hydrogen sulfide biosynthesis; sulfite from sulfate: step 1/3. Functionally, with CysD forms the ATP sulfurylase (ATPS) that catalyzes the adenylation of sulfate producing adenosine 5'-phosphosulfate (APS) and diphosphate, the first enzymatic step in sulfur assimilation pathway. APS synthesis involves the formation of a high-energy phosphoric-sulfuric acid anhydride bond driven by GTP hydrolysis by CysN coupled to ATP hydrolysis by CysD. The sequence is that of Sulfate adenylyltransferase subunit 1 from Shigella flexneri serotype 5b (strain 8401).